Reading from the N-terminus, the 205-residue chain is Non-specific lipid transfer protein GPI-anchored 21 (205 aa).

A signal peptide spans 1 to 27 (MNSNSFLISAALIFSLLSSNSPTSILA). Intrachain disulfides connect C33-C75, C44-C59, C60-C100, and C73-C109. N-linked (GlcNAc...) asparagine glycosylation is present at N89. Residues 116–182 (LPTPGPASFG…FAPPPPSSSP (67 aa)) are disordered. Residues 126–156 (PTTSPTDSQTSDPEGSASFRPPTSPTTSQTP) are compositionally biased toward low complexity. Residue S179 is the site of GPI-anchor amidated serine attachment. A propeptide spans 180–205 (SSPSSSHSLKLSYLLFAFAFTIIKFI) (removed in mature form).

This sequence belongs to the plant LTP family.

The protein resides in the cell membrane. In terms of biological role, probable lipid transfer protein. The polypeptide is Non-specific lipid transfer protein GPI-anchored 21 (Arabidopsis thaliana (Mouse-ear cress)).